The sequence spans 368 residues: Probable replication factor C subunit 5 (368 aa).

ATP is bound at residue 69–76 (GPPGTGKT).

The protein belongs to the activator 1 small subunits family. Heteropentamer of various rfc subunits that forms a complex (RFC) with PCNA in the presence of ATP.

It localises to the nucleus. Functionally, the elongation of primed DNA templates by DNA polymerase delta and epsilon requires the action of the accessory proteins proliferating cell nuclear antigen (PCNA) and activator 1. This Caenorhabditis elegans protein is Probable replication factor C subunit 5.